Consider the following 241-residue polypeptide: MMKIKIIFSYDGSAFLGSASQPHKKGVQDALSGALSHLGIVSPLLMASRTDKGVHASYAVASVGCGDHFVNLEYLQKQLNKFSHPFIHIKKIEKVKDDFEVRFDVKSREYRYIFSHSSYSPFMASYVHFYPKFDLDKANELLGFFVGKKDLKFFCKSGGDNKTTLREIFIARAYAYKDFSIFHFKANGFLRGQIRLSVASVLKVLEGKMSEKELKEQIEAKKQYNHFLAPPNGLYLSRICY.

Asp-51 acts as the Nucleophile in catalysis. Tyr-110 contacts substrate.

Belongs to the tRNA pseudouridine synthase TruA family. Homodimer.

The catalysed reaction is uridine(38/39/40) in tRNA = pseudouridine(38/39/40) in tRNA. Functionally, formation of pseudouridine at positions 38, 39 and 40 in the anticodon stem and loop of transfer RNAs. This is tRNA pseudouridine synthase A from Campylobacter jejuni subsp. jejuni serotype O:23/36 (strain 81-176).